A 482-amino-acid chain; its full sequence is E1B 55 kDa protein (482 aa).

The disordered stretch occupies residues 73-94; it reads VLDSGEGPSCADDRDKQEKKES. A compositionally biased stretch (basic and acidic residues) spans 83–94; the sequence is ADDRDKQEKKES. Ser476 and Ser477 each carry phosphoserine.

This sequence belongs to the adenoviridae E1B 55 kDa protein family. In terms of assembly, interacts with host PML-4 and PML-5; this interaction promotes efficient subnuclear targeting of E1B-55K to PML nuclear bodies. Interacts with E4-ORF3 protein. Interacts with E4-ORF6 protein.

Its subcellular location is the host nucleus. It is found in the host cytoplasm. Functionally, plays a major role to prevent cellular inhibition of viral genome replication. Assembles an SCF-like E3 ubiquitin ligase complex based on the cellular proteins ELOB, ELOC, CUL5 and RBX1, in cooperation with viral E4orf6. This viral RING-type ligase ubiquitinates cellular substrates and targets them to proteasomal degradation: TP53/p53, LIG4, MRE11-RAD50-NBS1 (MRN) complex, ITGA3, DAXX and BLM. E1B-55K probably acts as the substrate-specific adapter of the SCF-like E3 ubiquitin ligase complex. Degradation of host TP53/p53 activity is essential for preventing E1A-induced TP53 accumulation that would otherwise lead to cell apoptosis and growth arrest. E1B-55K also inactivates TP53 transcription-factor activity by binding its transactivation domain. E1B-55K also functions as a SUMO1 E3 ligase for TP53 which causes the latter to be sequestered in promyelocytic leukemia (PML) nuclear bodies thereby contributing to maximal inhibition of TP53 function. The sequence is that of E1B 55 kDa protein from Homo sapiens (Human).